Here is a 694-residue protein sequence, read N- to C-terminus: Elongation factor G (694 aa).

A tr-type G domain is found at 6 to 288 (KLYRNIGIAA…GVIEYLPSPT (283 aa)). Residues 15–22 (AHVDAGKT), 86–90 (DTPGH), and 140–143 (NKMD) each bind GTP.

It belongs to the TRAFAC class translation factor GTPase superfamily. Classic translation factor GTPase family. EF-G/EF-2 subfamily.

It is found in the cytoplasm. Catalyzes the GTP-dependent ribosomal translocation step during translation elongation. During this step, the ribosome changes from the pre-translocational (PRE) to the post-translocational (POST) state as the newly formed A-site-bound peptidyl-tRNA and P-site-bound deacylated tRNA move to the P and E sites, respectively. Catalyzes the coordinated movement of the two tRNA molecules, the mRNA and conformational changes in the ribosome. This Legionella pneumophila (strain Lens) protein is Elongation factor G.